Reading from the N-terminus, the 213-residue chain is uncharacterized protein (213 aa).

Over residues 1 to 14 (MSSDVLVTTPAQRQ) the composition is skewed to polar residues. The disordered stretch occupies residues 1–26 (MSSDVLVTTPAQRQTEPHAEAVSRNR). Positions 29 to 89 (QATFRKVLAA…EVYLDLVRQV (61 aa)) constitute an HTH tetR-type domain.

This is an uncharacterized protein from Mycobacterium tuberculosis (strain CDC 1551 / Oshkosh).